The chain runs to 312 residues: Porphobilinogen deaminase (312 aa).

S-(dipyrrolylmethanemethyl)cysteine is present on cysteine 243.

The protein belongs to the HMBS family. Monomer. Dipyrromethane is required as a cofactor.

The enzyme catalyses 4 porphobilinogen + H2O = hydroxymethylbilane + 4 NH4(+). The protein operates within porphyrin-containing compound metabolism; protoporphyrin-IX biosynthesis; coproporphyrinogen-III from 5-aminolevulinate: step 2/4. In terms of biological role, tetrapolymerization of the monopyrrole PBG into the hydroxymethylbilane pre-uroporphyrinogen in several discrete steps. The protein is Porphobilinogen deaminase of Vibrio vulnificus (strain CMCP6).